The primary structure comprises 282 residues: Protoheme IX farnesyltransferase (282 aa).

Helical transmembrane passes span 13 to 33 (VAGM…GAAG), 36 to 56 (MVTS…FNQI), 74 to 96 (ASGR…PALI), 101 to 120 (AGGV…YNGV), 129 to 149 (AFSL…GWLA), 156 to 176 (SPEI…HFWL), 207 to 227 (LWYA…FIAE), 232 to 252 (IAVC…LASP), and 261 to 281 (VSML…SGII).

This sequence belongs to the UbiA prenyltransferase family. Protoheme IX farnesyltransferase subfamily.

The protein resides in the cell inner membrane. The enzyme catalyses heme b + (2E,6E)-farnesyl diphosphate + H2O = Fe(II)-heme o + diphosphate. It functions in the pathway porphyrin-containing compound metabolism; heme O biosynthesis; heme O from protoheme: step 1/1. Its function is as follows. Converts heme B (protoheme IX) to heme O by substitution of the vinyl group on carbon 2 of heme B porphyrin ring with a hydroxyethyl farnesyl side group. The protein is Protoheme IX farnesyltransferase of Oleidesulfovibrio alaskensis (strain ATCC BAA-1058 / DSM 17464 / G20) (Desulfovibrio alaskensis).